Consider the following 1333-residue polypeptide: MHSTNNNSNKRNNEEKHKQPEIDSSANNGEGTSGTRAQTVGDTATEAGVRNETEAGASTRRQTDGTGLSGTNAKIATASSARQADVEKPADVTFTIENVDDVGIMQQKKPPTVVQSRTDVFNEQFANEALHPTTKVIFNGLDVNTEVQPLSDDFKQISDPKGYLTYSVKYEDQFTKKDKLRASEADDRIVGPTVNLFKYGAAVVNIDLNRDFFDTATGIDLTKGIPLVQDLLVPIGVTAGAEQSAEYVSGLLMVLFKVMTDNRLVIVGETTTPMSNTLSTVVNNVLRTTYHNNVGVNPALLRDFTQVNWLNRDITNMLQQAGTKYGLGLTETRLDYVRLVKTIVGHALNIDHFAASVLNINLRALMEANVTADDRIKALQAHSMISTQFHGPNQGALRPELAFDHDHIIRCLMLAAANYPRLEGIIVQINTGYVASANVIRPVSEKRYFPENLEQNQSAARLVSAVKARASEADISSIHLAIAREVSPMFNVHELKKIAESFEDPSSIVVVLEFILFALFFPTEFNRIKGDIQNVLLLFFSRWYPVEYGIFVQRGATYTINAAGEFEFSGRNEKWDQALYLSEHFPALFSDVPLAGANTIIAIMRLFTPQGFLRTDDLAIAANFPRASRNPQTYIPYTNQRGTVTNEFASRFRTIVATLANVVNERAVQDDMQKATRSCTKQWLRHLETQFDNIAVAHTDHLSVVYATMSNFMLNFTNNFSGNHATFKPDQYVITSPEGSYKPIIERQGETVDGLTIIDTSIVWPILCQCTYPLVRQSGKGVDAVSIMEEIVYPDPSTTLSQSLSVAQVLSKLTLPDAFINMILSGGDSVVMRTYQTEADDDLDEGIRMTTYDQYLSHIRERLHITNVPDPIYITGASTPDQIAASVQATHVAVVLYQSGVINGPASTYLRENEVLVVMPDYYDVVSRFANANLQMNNNRYHESVLEIADIFDQADFIQTSDAVRQLRALMPTLSTSQIRHAIERIAQITDVDSTDYGKLTLRFLGTLTRSLKMQNAQIRRIRPDGTVLRYDDQIDIEAFRWSRYFLDELQLRRLSVGLRLITNPRIARRFNGVRIMYLTDDDPDPDFVPDVPEGYVAVQYAHRLFSSSLANKRNRVTYTHPPTGMAYPSPTGRPHVHMTINERAGMSKLVADNIIASVIKSNWVVDILDIEYTAEVMTPSEGYTQHVDAESIMTAPKGKLFHLQFMDGLLRPEPSAFDPPASGEDMRLIYPLQPISVARSMRAIVNHNEVDRPRGAVAPSSYEMDTGTLSRNGDLLYSPVANGQVGIPKLEVDHISFSNVVSMMTANIRTGDDMAVERVNPDDVRAINIRNA.

The span at 1–10 (MHSTNNNSNK) shows a compositional bias: low complexity. The interval 1–71 (MHSTNNNSNK…QTDGTGLSGT (71 aa)) is disordered. A compositionally biased stretch (basic and acidic residues) spans 11–21 (RNNEEKHKQPE). Over residues 22–42 (IDSSANNGEGTSGTRAQTVGD) the composition is skewed to polar residues.

Belongs to the turreted BTV-fold inner capsid family. In terms of assembly, homodecamer; each decamer is made up of two conformers of VP2, called VP2A and VP2B. 12 homodecamers assemble to form an icosahedral capsid.

The protein localises to the virion. Functionally, inner capsid protein that self-assembles to form an icosahedral capsid with a T=2 symmetry, which consists of 120 copies of VP2, with channels at each of its five-fold vertices. This capsid constitutes the innermost concentric layer of the viral mature particle. The chain is Inner capsid protein VP1 from Bombyx mori (Silk moth).